The following is a 1465-amino-acid chain: Ankyrin and armadillo repeat-containing protein (1465 aa).

The chain crosses the membrane as a helical span at residues 313–329 (MGYLKLICFLIPFLLSL). 5 ANK repeats span residues 532–561 (AGYAIFHHAALHNRVSVICQLWSANFNVNQ), 582–611 (NGPTPLHLAAQACSLEATICLLCFKADYTL), 615–644 (RGWMPIHFAAFYDNICILIALCRKDPSLLE), 651–680 (NQCTPLLLAATSGALDTIQYLFSLGANWRK), and 684–714 (KGNNIIHLSVLAFHTEVLKYIIELNIPELPV). 6 ARM repeats span residues 745-784 (DRYWQCILDAGTIPALVNLLKSPQIKLQYKTVGLLSNIST), 786-825 (VSIVHAIVEAGGIPAVINLLTSDEPELHSRCAIILYDVAK), 827-865 (ENKDVIAKYSGIPALINLLSLNKESVLVNVMNCIRVLCM), 868-907 (ESNQQSMKDNNGIQYLIQFLSSDSDVLKALSSATIAEVAR), 910-949 (KEVQDAIAKEGAIPPLVTLFKGKQLSVQVKGAMAVESLAN), and 1085-1125 (PMSQ…CIVL). The interval 1431–1465 (KLGKDEQKANPDPPAFLNKLGKDEQNANPDPAESQ) is disordered.

The protein localises to the membrane. The protein is Ankyrin and armadillo repeat-containing protein (Ankar) of Mus musculus (Mouse).